A 473-amino-acid chain; its full sequence is MGSRNIVQQQNRAEAAVPGAMKQKNIAGEKKNRRALGDIGNLVTVRGVDGKAKAIPQVSRPVTRSFCAQLLANAQTAAADNNKINAKGAIVVDGVLPDRRVAAARVPAQKKAAVVKPRPEEIIVISPDSVAEKKEKPIEKEKAAEKSAKKKAPTLTSTLTARSKAASGVKTKTKEQIVDIDAADVNNDLAVVEYVEDMYKFYKSVENESRPHDYMGSQPEINEKMRAILIDWLVQVHHKFELSPETLYLTINIVDRYLASETTIRRELQLVGIGAMLIASKYEEIWAPEVHELVCISDNTYSDKQILVMEKKILGALEWYLTVPTPYVFLVRFIKASMTDSDVENMVYFLAELGMMNYATLIYCPSMIAAASVYAARCTLNKAPFWNETLQLHTGFSEPQLMDCAKLLVAFPKMAGDQKLKSIYRKYSNLERGAVALLSPAKSVFVFLIELLMNAIEKIQCSLFFTSEIWCRF.

The segment covering 1-12 (MGSRNIVQQQNR) has biased composition (polar residues). 2 disordered regions span residues 1–23 (MGSR…AMKQ) and 134–155 (KEKP…APTL). Over residues 134–147 (KEKPIEKEKAAEKS) the composition is skewed to basic and acidic residues.

It belongs to the cyclin family. Cyclin AB subfamily. As to quaternary structure, interacts with the CDC2 and CDK2 protein kinases to form a serine/threonine kinase holoenzyme complex. The cyclin subunit imparts substrate specificity to the complex.

Functionally, essential for the control of the cell cycle at the G2/M (mitosis) transition. G2/M cyclins accumulate steadily during G2 and are abruptly destroyed at mitosis. The polypeptide is G2/mitotic-specific cyclin-1 (Antirrhinum majus (Garden snapdragon)).